A 208-amino-acid polypeptide reads, in one-letter code: Redox-sensing transcriptional repressor Rex (208 aa).

Positions 18–57 (IYYRYFKLLETDGIERIKSEQLAKLVAIPSATIRRDFSYI) form a DNA-binding region, H-T-H motif. Position 92 to 97 (92 to 97 (GVGNLG)) interacts with NAD(+).

The protein belongs to the transcriptional regulatory Rex family. In terms of assembly, homodimer.

The protein localises to the cytoplasm. Modulates transcription in response to changes in cellular NADH/NAD(+) redox state. The chain is Redox-sensing transcriptional repressor Rex from Latilactobacillus sakei subsp. sakei (strain 23K) (Lactobacillus sakei subsp. sakei).